The following is a 395-amino-acid chain: F-box/LRR-repeat protein 12 (395 aa).

An F-box domain is found at 13-61; it reads TSIIHLPDDCLSFIFQRLDSVADHDSFGLTCHRWLNIQNISRRSLQFQC. LRR repeat units follow at residues 75 to 100, 101 to 126, 127 to 152, 154 to 177, 178 to 203, 226 to 250, 252 to 278, 279 to 304, 305 to 330, and 331 to 356; these read NPDVSSHHLHRLLTRFQWLEHLSLSG, CTVLNDSSLDSLRYPGARLHTLYLDC, CFGISDDGISTIASFCPNLSVVSLYR, NISDIGLETLARASLSLKCVNLSY, CPLVSDFGIKALSQACLQLESVKISN, SCQLEPKGITGIISGGGIEFLNISG, SCYIRKDGLVPIGSGIASKLRILNLRM, CRTVGDESIEAIAKGCPLLQEWNLAL, CHEVKISGWEAVGKWCRNLKKLHVNR, and CRNLCDQGLLALRCGCMNLQILYMNG.

The sequence is that of F-box/LRR-repeat protein 12 (FBL12) from Arabidopsis thaliana (Mouse-ear cress).